Here is a 277-residue protein sequence, read N- to C-terminus: 2-dehydro-3-deoxyphosphooctonate aldolase (277 aa).

It belongs to the KdsA family.

It is found in the cytoplasm. The catalysed reaction is D-arabinose 5-phosphate + phosphoenolpyruvate + H2O = 3-deoxy-alpha-D-manno-2-octulosonate-8-phosphate + phosphate. It functions in the pathway carbohydrate biosynthesis; 3-deoxy-D-manno-octulosonate biosynthesis; 3-deoxy-D-manno-octulosonate from D-ribulose 5-phosphate: step 2/3. The protein operates within bacterial outer membrane biogenesis; lipopolysaccharide biosynthesis. The protein is 2-dehydro-3-deoxyphosphooctonate aldolase of Brucella canis (strain ATCC 23365 / NCTC 10854 / RM-666).